The chain runs to 288 residues: MDYIENQGAYGTPTASIDWCELNYTYSPYIAEFYNTFSSLIISLFGIYGIWIMMPNFGTGVEKEHIKILKQLDVRNKVILSYISLIVVGVGSAFYHATLLYQNQLFDELPMIYTALIMLYIMVTVGEEKTKKGFKGGVLGNSLLRHLLPYLLIAYGLFVTITILVIQDQPKILQVSFGALVFYVVFHSIYLINKKKPDGMPSNPDSYLYKYAFVSMLVGFTCWVVERYFCKNGKTFGFQLHAFWHFFTGMSTYVWTQFLICKLLEAKHYCVGIKHTLGLPRIHAIKRF.

Residue asparagine 23 is glycosylated (N-linked (GlcNAc...) asparagine). 7 consecutive transmembrane segments (helical) span residues 41-61 (IISL…GTGV), 78-98 (VILS…YHAT), 105-125 (LFDE…MVTV), 146-166 (HLLP…ILVI), 172-192 (ILQV…IYLI), 206-226 (SYLY…WVVE), and 240-260 (LHAF…QFLI).

The protein belongs to the alkaline ceramidase family.

It localises to the membrane. The polypeptide is Putative alkaline ceramidase dcd3A (dcd3A) (Dictyostelium discoideum (Social amoeba)).